We begin with the raw amino-acid sequence, 784 residues long: Transcription factor E4F1 (784 aa).

The required for ubiquitin ligase activity stretch occupies residues 41-85; it reads GFLGLPAPFSEEDEDDVHRCGRCQAEFTALEDFVQHKIQKACQRA. S50 bears the Phosphoserine mark. The tract at residues 184 to 263 is mediates dimerization, DNA-binding, transcription repression of CCNA2 and interaction with HMGA2; sequence LLVNKDGRYV…GKSFRESGAL (80 aa). 2 C2H2-type zinc fingers span residues 192–214 and 220–242; these read YVCALCHKTFKTGSILKAHMVTH and HECKLCGASFRTKGSLIRHHRRH. A C2H2-type 3; degenerate zinc finger spans residues 248–272; that stretch reads YKCSKCGKSFRESGALTRHLKSLTP. Positions 369–566 are mediates interaction with CDKN2A; it reads NLLHQAMQNS…REKGSLVRHV (198 aa). C2H2-type zinc fingers lie at residues 435-457, 463-485, 491-513, 519-541, and 547-569; these read HPCPQCSETFPTAATLEAHKRGH, FACAQCGKAFPKAYLLKKHQEVH, FRCGDCGKLYKTIAHVRGHRRVH, YPCPKCGKRYKTKNAQQVHFRTH, and HVCQFCSRGFREKGSLVRHVRHH. The segment at 435–599 is interaction with BMI1; it reads HPCPQCSETF…LNRHLRTKGG (165 aa). The interval 521 to 580 is mediates interaction with TP53; that stretch reads CPKCGKRYKTKNAQQVHFRTHLEEKPHVCQFCSRGFREKGSLVRHVRHHTGEKPFKCYKC. The segment at 575–597 adopts a C2H2-type 9; degenerate zinc-finger fold; that stretch reads FKCYKCGRGFAEHGTLNRHLRTK. Residues 575–597 form a mediates interaction with RASSF1 region; the sequence is FKCYKCGRGFAEHGTLNRHLRTK.

Homodimer; binds DNA as a dimer. Forms a complex with CDKN2A and TP53. Interactions with TP53, RB1, ANP32A, BMI1 and FHL2 regulate E4F1 activity. Interacts with HDAC1, HMGA2 and RASSF1. As to quaternary structure, (Microbial infection) Interacts with HBV protein X. Proteolytic cleavage produces a 50 kDa N-terminal peptide (p50E4F) which has a DNA-binding activity and activates transcription in presence of the adenoviral E1A protein. The major full-length protein (p120E4F) functions as a repressor of transcription. Post-translationally, phosphorylated; p120E4F and p50E4F are both phosphorylated. Phosphorylation is cell cycle-dependent and differentially regulates DNA-binding activity and function of both forms. In terms of processing, may be sumoylated by UBE2I upon interaction with CDKN2A. In terms of tissue distribution, ubiquitously expressed.

Its subcellular location is the nucleus. It localises to the nucleoplasm. The protein resides in the cytoplasm. The enzyme catalyses S-ubiquitinyl-[E2 ubiquitin-conjugating enzyme]-L-cysteine + [acceptor protein]-L-lysine = [E2 ubiquitin-conjugating enzyme]-L-cysteine + N(6)-ubiquitinyl-[acceptor protein]-L-lysine.. Its pathway is protein modification; protein ubiquitination. Functionally, may function as a transcriptional repressor. May also function as a ubiquitin ligase mediating ubiquitination of chromatin-associated TP53. Functions in cell survival and proliferation through control of the cell cycle. Functions in the p53 and pRB tumor suppressor pathways and regulates the cyclin CCNA2 transcription. Identified as a cellular target of the adenoviral oncoprotein E1A, it is required for both transcriptional activation and repression of viral genes. This is Transcription factor E4F1 (E4F1) from Homo sapiens (Human).